The primary structure comprises 598 residues: Mitogen-activated protein kinase 19 (598 aa).

The region spanning 25–316 (YRILEVIGKG…AAEALADPYF (292 aa)) is the Protein kinase domain. Residues 31 to 39 (IGKGSYGVV) and K54 contribute to the ATP site. The active-site Proton acceptor is D151. Position 187 is a phosphothreonine (T187). The TXY motif lies at 187–189 (TDY). The residue at position 189 (Y189) is a Phosphotyrosine. T192 carries the phosphothreonine modification. The tract at residues 396 to 486 (GKSGPVIPPD…VTYENDRNLK (91 aa)) is disordered. A compositionally biased stretch (low complexity) spans 414 to 425 (SAVHSSAVNSNA).

This sequence belongs to the protein kinase superfamily. CMGC Ser/Thr protein kinase family. MAP kinase subfamily. Post-translationally, dually phosphorylated on Thr-187 and Tyr-189, which activates the enzyme.

It catalyses the reaction L-seryl-[protein] + ATP = O-phospho-L-seryl-[protein] + ADP + H(+). It carries out the reaction L-threonyl-[protein] + ATP = O-phospho-L-threonyl-[protein] + ADP + H(+). Its activity is regulated as follows. Activated by threonine and tyrosine phosphorylation. The protein is Mitogen-activated protein kinase 19 (MPK19) of Arabidopsis thaliana (Mouse-ear cress).